We begin with the raw amino-acid sequence, 229 residues long: Uracil-DNA glycosylase (229 aa).

The Proton acceptor role is filled by Asp64.

This sequence belongs to the uracil-DNA glycosylase (UDG) superfamily. UNG family.

It localises to the cytoplasm. It catalyses the reaction Hydrolyzes single-stranded DNA or mismatched double-stranded DNA and polynucleotides, releasing free uracil.. In terms of biological role, excises uracil residues from the DNA which can arise as a result of misincorporation of dUMP residues by DNA polymerase or due to deamination of cytosine. This is Uracil-DNA glycosylase from Salmonella arizonae (strain ATCC BAA-731 / CDC346-86 / RSK2980).